The sequence spans 360 residues: Phospho-N-acetylmuramoyl-pentapeptide-transferase (360 aa).

10 helical membrane-spanning segments follow: residues 27–47 (IVSL…MIAW), 73–93 (TMGG…WANL), 94–114 (SNPY…VGFV), 132–152 (WKYF…YAIG), 168–188 (VMPQ…VGTS), 199–219 (GLAI…AWAT), 236–256 (ASEL…FLWF), 263–283 (VFMG…IAVL), 288–308 (FLLV…ILQV), and 338–358 (VIVR…ATLK).

It belongs to the glycosyltransferase 4 family. MraY subfamily. Mg(2+) is required as a cofactor.

It localises to the cell inner membrane. It carries out the reaction UDP-N-acetyl-alpha-D-muramoyl-L-alanyl-gamma-D-glutamyl-meso-2,6-diaminopimeloyl-D-alanyl-D-alanine + di-trans,octa-cis-undecaprenyl phosphate = di-trans,octa-cis-undecaprenyl diphospho-N-acetyl-alpha-D-muramoyl-L-alanyl-D-glutamyl-meso-2,6-diaminopimeloyl-D-alanyl-D-alanine + UMP. Its pathway is cell wall biogenesis; peptidoglycan biosynthesis. In terms of biological role, catalyzes the initial step of the lipid cycle reactions in the biosynthesis of the cell wall peptidoglycan: transfers peptidoglycan precursor phospho-MurNAc-pentapeptide from UDP-MurNAc-pentapeptide onto the lipid carrier undecaprenyl phosphate, yielding undecaprenyl-pyrophosphoryl-MurNAc-pentapeptide, known as lipid I. The protein is Phospho-N-acetylmuramoyl-pentapeptide-transferase of Pectobacterium carotovorum subsp. carotovorum (strain PC1).